A 136-amino-acid chain; its full sequence is Beta-hordothionin (136 aa).

A signal peptide spans 1-27 (MGSKGLKGVMVCLLILGLVLEHVQVEG). 4 disulfides stabilise this stretch: cysteine 30/cysteine 66, cysteine 31/cysteine 58, cysteine 39/cysteine 56, and cysteine 43/cysteine 52. The propeptide at 73–136 (LALVSNSDEP…GDVGLTSLTA (64 aa)) is acidic domain.

It belongs to the plant thionin (TC 1.C.44) family. 4 C-C subfamily. Homodimer.

The protein localises to the secreted. In terms of biological role, thionins are small plant proteins which are toxic to animal cells. They seem to exert their toxic effect at the level of the cell membrane. Their precise function is not known. The chain is Beta-hordothionin (THI1.2) from Hordeum vulgare (Barley).